We begin with the raw amino-acid sequence, 506 residues long: MVVYNLNRGIGWASSGVEYAQAYRSEVFRKLGVEAKFIFTDMFQNENIEHLTRNIGFEDNEIIWLYTFFTDLTIAATSYSLQQLKESFSLPIDRTEKNGKIISFFFKGSSIVVTVMLNDESSNIVQRVEYLMGGKLVRKDYYSYTKMFSEYYAPEDIGPCLYQRTFYNEDGSVAYEENVDGENSIFKFKETILYSKEELVGYMLEKLQLTNSDLILLDRSTGIGQAVLRNKGNAKVAVVVHAEHYNVSATDETTILWNNYYDYQFSNADSIDAFITSTETQTKTLIDQFKKYLNIEPVVYTIPVGSLSKLQRKEWHERKAFSLLTCSRLASEKHIDWLINAVVEANKVIPELTFDIYGEGGERQKLQEIIAKNKANNYIRLMGHKNLSSVYKDYQVYLSGSTSEGFGLTLMEAIGSGLPIIGLDVPYGNQTFIENNLNGYLIPRETPDNPQQISTAFAQYIVALFNSKDICKKHEYSYRIASRFLNDKIIENWSFFLRRLLNDYTI.

A UDP-binding site is contributed by 16–19; that stretch reads GVEY. Histidine 241 lines the N-acetyl-D-glucosamine pocket. 384–385 contacts UDP; it reads HK. Residue 404–407 coordinates N-acetyl-D-glucosamine; the sequence is EGFG.

Belongs to the glycosyltransferase group 1 family. Glycosyltransferase 4 subfamily. In terms of assembly, interacts with stabilizing protein GtfB (Gtf2), probably as a heterotetramer with 2 subunits each of GtfA and GtfB, part of the accessory SecA2/SecY2 protein translocation apparatus.

It is found in the cytoplasm. It localises to the cell membrane. The enzyme catalyses L-seryl-[protein] + UDP-N-acetyl-alpha-D-glucosamine = 3-O-[N-acetyl-alpha-D-glucosaminyl]-L-seryl-[protein] + UDP + H(+). It participates in protein modification; protein glycosylation. Required for polymorphic O-glycosylation of the serine-rich repeat protein Srr2. Catalyzes the first step in glycosylation by transferring N-acetylglucosamine from UDP-GlcNAc to serine residues of Srr2. Part of the accessory SecA2/SecY2 system specifically required to export serine-rich repeat proteins, probably Srr2 in this organism. The GtfA-GtfB (Gtf1-Gtf2 in this bacteria) complex adds GlcNAc from UDP-GlcNAc to Srr2 substrate. This subunit has low glycosyltransferase activity; GtfB enhances glycosyltransferase activity in vitro. Upon expression in S.parasanguis GtfA/GtfB restores expression of serine-rich repeat protein Fap1 and complements a biofilm formation defect. This chain is UDP-N-acetylglucosamine--peptide N-acetylglucosaminyltransferase GtfA subunit, found in Streptococcus agalactiae.